A 348-amino-acid chain; its full sequence is Protein RecA (348 aa).

66 to 73 (GPESSGKT) is an ATP binding site.

Belongs to the RecA family.

It localises to the cytoplasm. In terms of biological role, can catalyze the hydrolysis of ATP in the presence of single-stranded DNA, the ATP-dependent uptake of single-stranded DNA by duplex DNA, and the ATP-dependent hybridization of homologous single-stranded DNAs. It interacts with LexA causing its activation and leading to its autocatalytic cleavage. The chain is Protein RecA from Legionella pneumophila (strain Lens).